A 119-amino-acid polypeptide reads, in one-letter code: Large ribosomal subunit protein uL14 (119 aa).

Belongs to the universal ribosomal protein uL14 family. Part of the 50S ribosomal subunit. Forms a cluster with proteins L3 and L19. In the 70S ribosome, L14 and L19 interact and together make contacts with the 16S rRNA in bridges B5 and B8.

Functionally, binds to 23S rRNA. Forms part of two intersubunit bridges in the 70S ribosome. The polypeptide is Large ribosomal subunit protein uL14 (Wolbachia pipientis wMel).